We begin with the raw amino-acid sequence, 249 residues long: Imidazole glycerol phosphate synthase subunit HisF (249 aa).

Residues D11 and D130 contribute to the active site.

It belongs to the HisA/HisF family. Heterodimer of HisH and HisF.

It localises to the cytoplasm. The enzyme catalyses 5-[(5-phospho-1-deoxy-D-ribulos-1-ylimino)methylamino]-1-(5-phospho-beta-D-ribosyl)imidazole-4-carboxamide + L-glutamine = D-erythro-1-(imidazol-4-yl)glycerol 3-phosphate + 5-amino-1-(5-phospho-beta-D-ribosyl)imidazole-4-carboxamide + L-glutamate + H(+). The protein operates within amino-acid biosynthesis; L-histidine biosynthesis; L-histidine from 5-phospho-alpha-D-ribose 1-diphosphate: step 5/9. In terms of biological role, IGPS catalyzes the conversion of PRFAR and glutamine to IGP, AICAR and glutamate. The HisF subunit catalyzes the cyclization activity that produces IGP and AICAR from PRFAR using the ammonia provided by the HisH subunit. This chain is Imidazole glycerol phosphate synthase subunit HisF, found in Exiguobacterium sibiricum (strain DSM 17290 / CCUG 55495 / CIP 109462 / JCM 13490 / 255-15).